A 544-amino-acid chain; its full sequence is NADH-quinone oxidoreductase subunit C/D (544 aa).

Residues 1 to 138 are NADH dehydrogenase I subunit C; it reads MLNCDMLIDS…KGQICTETED (138 aa). The tract at residues 161–544 is NADH dehydrogenase I subunit D; the sequence is MLLNVGPSHP…MNFIAGEFDR (384 aa).

This sequence in the N-terminal section; belongs to the complex I 30 kDa subunit family. It in the C-terminal section; belongs to the complex I 49 kDa subunit family. As to quaternary structure, NDH-1 is composed of 13 different subunits. Subunits NuoB, CD, E, F, and G constitute the peripheral sector of the complex.

It is found in the cell inner membrane. The catalysed reaction is a quinone + NADH + 5 H(+)(in) = a quinol + NAD(+) + 4 H(+)(out). Its function is as follows. NDH-1 shuttles electrons from NADH, via FMN and iron-sulfur (Fe-S) centers, to quinones in the respiratory chain. The immediate electron acceptor for the enzyme in this species is believed to be ubiquinone. Couples the redox reaction to proton translocation (for every two electrons transferred, four hydrogen ions are translocated across the cytoplasmic membrane), and thus conserves the redox energy in a proton gradient. This chain is NADH-quinone oxidoreductase subunit C/D, found in Aliarcobacter butzleri (strain RM4018) (Arcobacter butzleri).